The primary structure comprises 145 residues: 5-hydroxymethyl-dUMP N-hydrolase (145 aa).

5-hydroxymethyl-dUMP contacts are provided by Gly-7, Ile-9, Arg-10, Gly-11, Ser-79, Gly-81, Glu-85, and Ser-109.

It belongs to the 2'-deoxynucleoside 5'-phosphate N-hydrolase 1 family. Monomer and homodimer.

The protein localises to the cytoplasm. Its subcellular location is the nucleus. The enzyme catalyses 5-hydroxymethyl-dUMP + H2O = 5-hydroxymethyluracil + 2-deoxy-D-ribose 5-phosphate. Its function is as follows. Part of a nucleotide salvage pathway that eliminates epigenetically modified 5-hydroxymethyl-dCMP (hmdCMP) in a two-step process entailing deamination to cytotoxic 5-hydroxymethyl-dUMP (hmdUMP), followed by its hydrolysis into 5-hydroxymethyluracil (hmU) and 2-deoxy-D-ribose 5-phosphate (deoxyribosephosphate). Catalyzes the second step in that pathway, the hydrolysis of the N-glycosidic bond in hmdUMP, degrading this cytotoxic nucleotide to avoid its genomic integration. The protein is 5-hydroxymethyl-dUMP N-hydrolase of Esox lucius (Northern pike).